A 626-amino-acid polypeptide reads, in one-letter code: Chaperone protein DnaK (626 aa).

Residue Thr175 is modified to Phosphothreonine; by autocatalysis. 3 disordered regions span residues 469–488, 498–517, and 583–626; these read DKGT…GLPK, AEAH…TRNQ, and AQQG…KDNK. Basic and acidic residues predominate over residues 498 to 516; sequence AEAHEAEDKKRKEDAETRN. A compositionally biased stretch (acidic residues) spans 609-626; that stretch reads SDDDVVDAEVVDDDKDNK.

Belongs to the heat shock protein 70 family.

Functionally, acts as a chaperone. In Bifidobacterium adolescentis (strain ATCC 15703 / DSM 20083 / NCTC 11814 / E194a), this protein is Chaperone protein DnaK.